We begin with the raw amino-acid sequence, 493 residues long: ATP synthase subunit beta, chloroplastic (493 aa).

170–177 (GGAGVGKT) serves as a coordination point for ATP.

This sequence belongs to the ATPase alpha/beta chains family. F-type ATPases have 2 components, CF(1) - the catalytic core - and CF(0) - the membrane proton channel. CF(1) has five subunits: alpha(3), beta(3), gamma(1), delta(1), epsilon(1). CF(0) has four main subunits: a(1), b(1), b'(1) and c(9-12).

The protein resides in the plastid. The protein localises to the chloroplast thylakoid membrane. The catalysed reaction is ATP + H2O + 4 H(+)(in) = ADP + phosphate + 5 H(+)(out). Produces ATP from ADP in the presence of a proton gradient across the membrane. The catalytic sites are hosted primarily by the beta subunits. This is ATP synthase subunit beta, chloroplastic from Staurastrum punctulatum (Green alga).